The primary structure comprises 341 residues: HTH-type transcriptional repressor PurR (341 aa).

The HTH lacI-type domain occupies 2-56 (ATIKDVAKHAGVSTTTVSHVINKTRFVAENTKAAVWAAIKELHYSPSAVARSLKV). A DNA-binding region (H-T-H motif) is located at residues 4-23 (IKDVAKHAGVSTTTVSHVIN). The DNA-binding element occupies 48-56 (SAVARSLKV). Residues tyrosine 73, arginine 190, threonine 192, phenylalanine 221, and aspartate 275 each coordinate hypoxanthine.

Homodimer.

It functions in the pathway purine metabolism; purine nucleotide biosynthesis [regulation]. Functionally, is the main repressor of the genes involved in the de novo synthesis of purine nucleotides, regulating purB, purC, purEK, purF, purHD, purL, purMN and guaBA expression. PurR is allosterically activated to bind its cognate DNA by binding the purine corepressors, hypoxanthine or guanine, thereby effecting transcription repression. This is HTH-type transcriptional repressor PurR from Yersinia enterocolitica serotype O:8 / biotype 1B (strain NCTC 13174 / 8081).